A 427-amino-acid polypeptide reads, in one-letter code: MTRTNSDFLTNSDPAIAGLINQELQRQRDHLELIASENFTSAAVLAAQGSVLTNKYAEGLPGKRYYGGCEFIDKIEQIAIDRAKQLFGADHANVQPHSGAQANFAVFLTLLKPGDKIMGMDLSHGGHLTHGSPVNVSGKWFQVCHYGVSQQTEQLDYDQIRELALRERPKLLICGYSAYPRIIDFEKFRSIADEVGAYLLADIAHIAGLVATGLHPNPLPYCDVVTTTTHKTLRGPRGGLILTRDAELGKKLDKSVFPGTQGGPLEHVIAGKAVAFGEALKPEFQGYSAQVIDNARTLANQLQTRGLKLVSDGTDNHLMLVDLRSVNMTGKRADQLVSEVNITANKNTVPFDPQSPFVTSGLRLGSPAMTTRGMGEAEFTEIGNIIADRLLNPDSDTVAQDCKRRVAALCDRFPLYPHLEIPVPVLA.

Residues Leu-122 and Gly-126–Leu-128 contribute to the (6S)-5,6,7,8-tetrahydrofolate site. Lys-231 carries the post-translational modification N6-(pyridoxal phosphate)lysine. Ser-355–Phe-357 provides a ligand contact to (6S)-5,6,7,8-tetrahydrofolate.

The protein belongs to the SHMT family. As to quaternary structure, homodimer. Requires pyridoxal 5'-phosphate as cofactor.

The protein localises to the cytoplasm. It catalyses the reaction (6R)-5,10-methylene-5,6,7,8-tetrahydrofolate + glycine + H2O = (6S)-5,6,7,8-tetrahydrofolate + L-serine. It functions in the pathway one-carbon metabolism; tetrahydrofolate interconversion. It participates in amino-acid biosynthesis; glycine biosynthesis; glycine from L-serine: step 1/1. Catalyzes the reversible interconversion of serine and glycine with tetrahydrofolate (THF) serving as the one-carbon carrier. This reaction serves as the major source of one-carbon groups required for the biosynthesis of purines, thymidylate, methionine, and other important biomolecules. Also exhibits THF-independent aldolase activity toward beta-hydroxyamino acids, producing glycine and aldehydes, via a retro-aldol mechanism. The polypeptide is Serine hydroxymethyltransferase (Nostoc sp. (strain PCC 7120 / SAG 25.82 / UTEX 2576)).